Reading from the N-terminus, the 211-residue chain is Protein-L-isoaspartate O-methyltransferase (211 aa).

Serine 60 is a catalytic residue.

Belongs to the methyltransferase superfamily. L-isoaspartyl/D-aspartyl protein methyltransferase family.

The protein localises to the cytoplasm. It carries out the reaction [protein]-L-isoaspartate + S-adenosyl-L-methionine = [protein]-L-isoaspartate alpha-methyl ester + S-adenosyl-L-homocysteine. Its function is as follows. Catalyzes the methyl esterification of L-isoaspartyl residues in peptides and proteins that result from spontaneous decomposition of normal L-aspartyl and L-asparaginyl residues. It plays a role in the repair and/or degradation of damaged proteins. The chain is Protein-L-isoaspartate O-methyltransferase from Alteromonas mediterranea (strain DSM 17117 / CIP 110805 / LMG 28347 / Deep ecotype).